A 181-amino-acid chain; its full sequence is Large ribosomal subunit protein uL10 (181 aa).

The protein belongs to the universal ribosomal protein uL10 family. Part of the ribosomal stalk of the 50S ribosomal subunit. The N-terminus interacts with L11 and the large rRNA to form the base of the stalk. The C-terminus forms an elongated spine to which L12 dimers bind in a sequential fashion forming a multimeric L10(L12)X complex.

Functionally, forms part of the ribosomal stalk, playing a central role in the interaction of the ribosome with GTP-bound translation factors. The sequence is that of Large ribosomal subunit protein uL10 from Chloroflexus aggregans (strain MD-66 / DSM 9485).